We begin with the raw amino-acid sequence, 179 residues long: Large ribosomal subunit protein uL5 (179 aa).

Belongs to the universal ribosomal protein uL5 family. In terms of assembly, part of the 50S ribosomal subunit; part of the 5S rRNA/L5/L18/L25 subcomplex. Contacts the 5S rRNA and the P site tRNA. Forms a bridge to the 30S subunit in the 70S ribosome.

This is one of the proteins that bind and probably mediate the attachment of the 5S RNA into the large ribosomal subunit, where it forms part of the central protuberance. In the 70S ribosome it contacts protein S13 of the 30S subunit (bridge B1b), connecting the 2 subunits; this bridge is implicated in subunit movement. Contacts the P site tRNA; the 5S rRNA and some of its associated proteins might help stabilize positioning of ribosome-bound tRNAs. This is Large ribosomal subunit protein uL5 from Dehalococcoides mccartyi (strain ATCC BAA-2100 / JCM 16839 / KCTC 5957 / BAV1).